Reading from the N-terminus, the 252-residue chain is ATP-dependent L-serine kinase (252 aa).

The active site involves Glu-35. Val-73 contributes to the O-phospho-L-serine binding site. Mg(2+) is bound at residue Asp-74. O-phospho-L-serine-binding residues include Gly-75, His-76, His-77, Trp-107, Lys-231, Thr-233, and His-235.

This sequence belongs to the SerK family. As to quaternary structure, monomer. Requires Mg(2+) as cofactor.

The enzyme catalyses L-serine + ATP = O-phospho-L-serine + ADP + H(+). Free serine kinase that uses ATP to phosphorylate L-serine to yield O-phospho-L-serine and ADP. Can use ATP, UTP, CTP, GTP and the inorganic polyphosphates triphosphate and tetraphosphate as phosphate donors, with a preference for nucleoside 5'-triphosphates, but cannot use ADP. The catalytic efficiency is highest for ATP. Is specific for L-serine and cannot phosphorylate structurally similar compounds such as D-serine, L-threonine, L-homoserine, hydroxypyruvate, 3-hydroxypropionate and DL-glycerate. Likely contributes to serine metabolism, including cysteine biosynthesis. In Staphylothermus marinus (strain ATCC 43588 / DSM 3639 / JCM 9404 / F1), this protein is ATP-dependent L-serine kinase.